Reading from the N-terminus, the 173-residue chain is Adenine phosphoribosyltransferase (173 aa).

Belongs to the purine/pyrimidine phosphoribosyltransferase family. Homodimer.

The protein localises to the cytoplasm. It carries out the reaction AMP + diphosphate = 5-phospho-alpha-D-ribose 1-diphosphate + adenine. It participates in purine metabolism; AMP biosynthesis via salvage pathway; AMP from adenine: step 1/1. In terms of biological role, catalyzes a salvage reaction resulting in the formation of AMP, that is energically less costly than de novo synthesis. The chain is Adenine phosphoribosyltransferase from Thermoanaerobacter sp. (strain X514).